The following is a 102-amino-acid chain: Large ribosomal subunit protein bL21 (102 aa).

Belongs to the bacterial ribosomal protein bL21 family. In terms of assembly, part of the 50S ribosomal subunit. Contacts protein L20.

Functionally, this protein binds to 23S rRNA in the presence of protein L20. The protein is Large ribosomal subunit protein bL21 of Exiguobacterium sp. (strain ATCC BAA-1283 / AT1b).